The chain runs to 580 residues: Acyl-coenzyme A synthetase ACSM4, mitochondrial (580 aa).

Residues 1–22 constitute a mitochondrion transit peptide; it reads MKVLLHCQRLRFIWLAKPAGRH. ATP is bound by residues 229 to 237, 368 to 373, Asp455, Arg470, and Lys566; these read TSGTTGSPK and EGYGQT.

Belongs to the ATP-dependent AMP-binding enzyme family. Requires Mg(2+) as cofactor. Mn(2+) serves as cofactor.

It localises to the mitochondrion. The catalysed reaction is a medium-chain fatty acid + ATP + CoA = a medium-chain fatty acyl-CoA + AMP + diphosphate. It catalyses the reaction hexanoate + ATP + CoA = hexanoyl-CoA + AMP + diphosphate. The enzyme catalyses octanoate + ATP + CoA = octanoyl-CoA + AMP + diphosphate. It carries out the reaction decanoate + ATP + CoA = decanoyl-CoA + AMP + diphosphate. The catalysed reaction is dodecanoate + ATP + CoA = dodecanoyl-CoA + AMP + diphosphate. Functionally, catalyzes the activation of fatty acids by CoA to produce an acyl-CoA, the first step in fatty acid metabolism. Capable of activating medium-chain fatty acids with a preference for C6-12 fatty acids. This chain is Acyl-coenzyme A synthetase ACSM4, mitochondrial (Acsm4), found in Mus musculus (Mouse).